Here is a 160-residue protein sequence, read N- to C-terminus: Transcriptional repressor NrdR (160 aa).

Polar residues predominate over residues 1-11; that stretch reads MRCPNCNSLDT. The interval 1–20 is disordered; sequence MRCPNCNSLDTQVKDSRPTE. The segment at 3–34 is a zinc-finger region; that stretch reads CPNCNSLDTQVKDSRPTEDSSVIRRRRVCIAC. The ATP-cone domain occupies 49–139; sequence LIVIKRNGRR…VYRNFREAKD (91 aa).

This sequence belongs to the NrdR family. The cofactor is Zn(2+).

In terms of biological role, negatively regulates transcription of bacterial ribonucleotide reductase nrd genes and operons by binding to NrdR-boxes. This is Transcriptional repressor NrdR from Rhodopseudomonas palustris (strain ATCC BAA-98 / CGA009).